Here is a 151-residue protein sequence, read N- to C-terminus: MNGMSGSSPAAPAPSPSSFFQHRHRHGGMMHMTFFWGKTTEVLFDGWPGTSLKMYWVCLAVIFVISAFSECLSRCGFMKSGPASLGGGLLQTAVYTVRAALSYLVMLAVMSFNGGVFVAAMAGFGLGFMIFGSRAFRATSSNSHTEVQSHC.

2 helical membrane passes run 52–72 and 103–123; these read LKMY…SECL and YLVM…AMAG.

This sequence belongs to the copper transporter (Ctr) (TC 1.A.56) family. SLC31A subfamily. As to expression, highly expressed in stems and at lower levels in leaves and flowers.

The protein localises to the membrane. Involved in the transport of copper. The sequence is that of Copper transporter 3 (COPT3) from Arabidopsis thaliana (Mouse-ear cress).